Here is a 77-residue protein sequence, read N- to C-terminus: Pi/alpha-stichotoxin-Hmg5b (77 aa).

Positions 1–21 are cleaved as a signal peptide; sequence MDYQRLLFLFAVAMVITTTVA. Positions 22-34 are excised as a propeptide; sequence LPKDTALMDGQLQ. 3 cysteine pairs are disulfide-bonded: Cys40–Cys73, Cys42–Cys66, and Cys56–Cys74. At Met52 the chain carries Methionine sulfoxide; partial.

It belongs to the sea anemone type 3 (BDS) potassium channel toxin family. Toxin occurs in two forms in the mucus, Hmg 1b-2 which is not oxidized and Hmg 1b-2 MetOx which is oxidized at Met-52.

It localises to the secreted. It is found in the nematocyst. Its function is as follows. The non-oxidized toxin is remarkably non-selective with activity on many different ion channels. Weakly and reversibly inhibits rat and human homomeric ASIC1 (isoform ASIC1a) (IC(50)=4.8 uM, and IC(50)=14.6 uM), and ASIC3 (IC(50)=15.9 uM). Molecular modeling interaction with ASIC1a suggests that this peptide hinders the collapse of acidic pockets and stabilizes nonconducting channels state. It activates several potassium channels including Kv1.1/KCNA1, Kv1.2/KCNA2, and drosophila Shaker IR. It moderately to potently inhibits potassium channels including Kv1.3/KCNA3, Kv1.4/KCNA4, Kv1.5/KCNA5, Kv1.6/KCNA6, Kv2.1/KCNB1, Kv4.2/KCND2, Kv7.1/KCNQ1, Kv7.2/Kv7.3 (KCNQ2/KCNQ3), Kv7.4/KCNQ4, hERG/KCNH2, and C.elegans QKT1. On sodium channels, it moderately to potently inhibits Nav1.1/SCN1A, Nav1.2/SCN2A, Nav1.3/SCN3A, Nav1.4/SCN4A, Nav1.5/SCN5A, Nav1.6/SCN8A, Nav1.7/SCN9A, Nav1.8/SCN10A, and B.germanica BgNav. It also moderately to potently inhibits Cav3.1/CACNA1G, Cav3.2/CACNA1H, and Cav3.3/CACNA1I. Significant shifts in the voltage-current relationship are observed on Kv and Nav, depending on the channel isoform, whereas the toxin does not seem to modulate the voltage-sensor domains of Cav channels, acting mainly as a pore blocker. Does not activate nicotinic acetylcholine receptors (nAChR), but potentiates ACh-elicited current of human alpha-7/CHRNA7 nAChR. Is also able to bind T.californica muscle-type nAChRs. In vivo, causes an excitatory effect in mice behavior. Also shows antihyperalgesic and analgesic activity in the acid-induced muscle pain mice model, and weak anti-inflammatory effect in models of acute local inflammation. Functionally, forms an oxidized toxin derivative (Hmg 1b-2 MetOx). Able to bind T.californica muscle-type nAChRs (alpha-1-beta-1-delta-epsilon (CHRNA1-CHRNB1-CHRND-CHRNE)). This chain is Pi/alpha-stichotoxin-Hmg5b, found in Heteractis magnifica (Magnificent sea anemone).